A 510-amino-acid polypeptide reads, in one-letter code: Beta-galactosidase (510 aa).

Glu-210 functions as the Proton donor in the catalytic mechanism. The active-site Nucleophile is Glu-414.

The protein belongs to the glycosyl hydrolase 1 family.

It catalyses the reaction Hydrolysis of terminal non-reducing beta-D-galactose residues in beta-D-galactosides.. In Pyrococcus woesei, this protein is Beta-galactosidase.